The chain runs to 250 residues: Adenosylcobinamide-GDP ribazoletransferase (250 aa).

Helical transmembrane passes span 31–51 (ISYL…VYFV), 55–75 (FILG…ITGA), 106–126 (VGTN…AVLN), 133–153 (IIIA…LLMC), 187–207 (IGYV…VLFI), and 230–250 (NEIA…CGLL).

This sequence belongs to the CobS family. It depends on Mg(2+) as a cofactor.

The protein localises to the cell membrane. It catalyses the reaction alpha-ribazole + adenosylcob(III)inamide-GDP = adenosylcob(III)alamin + GMP + H(+). It carries out the reaction alpha-ribazole 5'-phosphate + adenosylcob(III)inamide-GDP = adenosylcob(III)alamin 5'-phosphate + GMP + H(+). Its pathway is cofactor biosynthesis; adenosylcobalamin biosynthesis; adenosylcobalamin from cob(II)yrinate a,c-diamide: step 7/7. Functionally, joins adenosylcobinamide-GDP and alpha-ribazole to generate adenosylcobalamin (Ado-cobalamin). Also synthesizes adenosylcobalamin 5'-phosphate from adenosylcobinamide-GDP and alpha-ribazole 5'-phosphate. The sequence is that of Adenosylcobinamide-GDP ribazoletransferase from Clostridium novyi (strain NT).